Here is a 650-residue protein sequence, read N- to C-terminus: Serine/threonine-protein kinase oca2 (650 aa).

The span at M1 to G14 shows a compositional bias: polar residues. Disordered stretches follow at residues M1–I210 and H222–A288. At S72 the chain carries Phosphoserine. Positions N78–E98 are enriched in basic and acidic residues. The span at P140–N154 shows a compositional bias: polar residues. 2 stretches are compositionally biased toward basic residues: residues H222–H231 and H245–H257. Positions H258–P279 are enriched in basic and acidic residues. At S286 the chain carries Phosphoserine. Residues G302–I614 enclose the Protein kinase domain. ATP-binding positions include L308–V316 and K331. D425 (proton acceptor) is an active-site residue. The disordered stretch occupies residues P549–K570.

This sequence belongs to the protein kinase superfamily. Ser/Thr protein kinase family.

It localises to the cytoplasm. It carries out the reaction L-seryl-[protein] + ATP = O-phospho-L-seryl-[protein] + ADP + H(+). The enzyme catalyses L-threonyl-[protein] + ATP = O-phospho-L-threonyl-[protein] + ADP + H(+). Its function is as follows. Overexpression causes cell cycle arrest. The chain is Serine/threonine-protein kinase oca2 from Schizosaccharomyces pombe (strain 972 / ATCC 24843) (Fission yeast).